Reading from the N-terminus, the 645-residue chain is Acetyl-coenzyme A synthetase (645 aa).

CoA-binding positions include 190–193 (RGGR) and Thr308. ATP-binding positions include 384 to 386 (GEP), 408 to 413 (DTWWQT), Asp497, and Arg512. Ser520 contacts CoA. Arg523 contributes to the ATP binding site. Mg(2+)-binding residues include Val534, His536, and Val539. At Lys606 the chain carries N6-acetyllysine.

The protein belongs to the ATP-dependent AMP-binding enzyme family. Mg(2+) is required as a cofactor. Post-translationally, acetylated. Deacetylation by the SIR2-homolog deacetylase activates the enzyme.

The catalysed reaction is acetate + ATP + CoA = acetyl-CoA + AMP + diphosphate. Functionally, catalyzes the conversion of acetate into acetyl-CoA (AcCoA), an essential intermediate at the junction of anabolic and catabolic pathways. AcsA undergoes a two-step reaction. In the first half reaction, AcsA combines acetate with ATP to form acetyl-adenylate (AcAMP) intermediate. In the second half reaction, it can then transfer the acetyl group from AcAMP to the sulfhydryl group of CoA, forming the product AcCoA. In Saccharophagus degradans (strain 2-40 / ATCC 43961 / DSM 17024), this protein is Acetyl-coenzyme A synthetase.